Reading from the N-terminus, the 291-residue chain is MRSLISSLDLTREEVEEILKYAKEFKEGKEETIKASAVLFFSEPSTRTRLSFEKAARELGIETYLVSGSESSTVKGESFFDTLKTFEGLGFDYVVFRVPFVFFPYKEIVKSLNLRLVNAGDGTHQHPSQGLIDFFTIKEHFGEVKDLRVLYVGDIKHSRVFRSGAPLLNMFGAKIGVCGPKTLIPRDVEVFKVDVFDDVDKGIDWADVVIWLRLQKERQKENYIPSESSYFKQFGLTKERFEKVKLYMHPGPVNRNVDIDHELVYTEKSLIQEQVKNGIPVRKAIYKFLWT.

Carbamoyl phosphate-binding residues include arginine 47 and threonine 48. Lysine 75 is an L-aspartate binding site. Residues arginine 97, histidine 126, and glutamine 129 each coordinate carbamoyl phosphate. Residues arginine 159 and arginine 213 each contribute to the L-aspartate site. Carbamoyl phosphate is bound by residues glycine 251 and proline 252.

The protein belongs to the aspartate/ornithine carbamoyltransferase superfamily. ATCase family. As to quaternary structure, heterododecamer (2C3:3R2) of six catalytic PyrB chains organized as two trimers (C3), and six regulatory PyrI chains organized as three dimers (R2).

The enzyme catalyses carbamoyl phosphate + L-aspartate = N-carbamoyl-L-aspartate + phosphate + H(+). Its pathway is pyrimidine metabolism; UMP biosynthesis via de novo pathway; (S)-dihydroorotate from bicarbonate: step 2/3. In terms of biological role, catalyzes the condensation of carbamoyl phosphate and aspartate to form carbamoyl aspartate and inorganic phosphate, the committed step in the de novo pyrimidine nucleotide biosynthesis pathway. This is Aspartate carbamoyltransferase catalytic subunit from Aquifex aeolicus (strain VF5).